Reading from the N-terminus, the 727-residue chain is Iron-sulfur clusters transporter atm1, mitochondrial (727 aa).

The disordered stretch occupies residues 46 to 97; the sequence is NSPLRKDASKEPALASNSKTTNPIPTQASASVNPPKDARNATTAKKDLLSET. The span at 60–77 shows a compositional bias: polar residues; the sequence is ASNSKTTNPIPTQASASV. Over residues 81–94 the composition is skewed to basic and acidic residues; that stretch reads KDARNATTAKKDLL. Residues 131–152 form a helical membrane-spanning segment; that stretch reads VGTALSLLVGAKILNVEVPFYF. An ABC transmembrane type-1 domain is found at 131–421; it reads VGTALSLLVG…LGSVYRELRQ (291 aa). The Mitochondrial intermembrane portion of the chain corresponds to 153–175; the sequence is KSIVDSMNIDFATVGGTAYTVAG. The chain crosses the membrane as a helical span at residues 176-199; sequence SMIIAYGVTRIGATLFQELRNAVF. Over 200-248 the chain is Mitochondrial matrix; it reads ASVAQKAIRRVARNVFEHLLRLDLNFHLSRQTGGLTRAIDRGTKGISFL. A helical membrane pass occupies residues 249–272; it reads LTSMVFHVVPTALEISLVCGILTY. Position 273 (glutamine 273) is a topological domain, mitochondrial intermembrane. The helical transmembrane segment at 274–294 threads the bilayer; the sequence is YGFQFAAITAATMVAYTAFTI. Topologically, residues 295–360 are mitochondrial matrix; that stretch reads TTTAWRTKFR…ASIKVTTSLA (66 aa). Glutathione-binding positions include 300 to 304 and 363 to 366; these read RTKFR and NSGQ. A helical transmembrane segment spans residues 361-379; sequence FLNSGQNMIFSSALAAMMY. At 380-394 the chain is on the mitochondrial intermembrane side; that stretch reads LAANGVANGNLTVGD. The helical transmembrane segment at 395–416 threads the bilayer; the sequence is LVMVNQLVFQLSVPLNFLGSVY. Glycine 413 serves as a coordination point for glutathione. At 417 to 727 the chain is on the mitochondrial matrix side; sequence RELRQSLLDM…DMAPGPKAQQ (311 aa). The ABC transporter domain occupies 456–692; it reads IRFENVTFGY…NGIYAELWNA (237 aa). ATP contacts are provided by residues tyrosine 465 and 489–500; that span reads GPSGCGKSTILR. Over residues 702-719 the composition is skewed to basic and acidic residues; it reads EFERETERDDVESKERDM. Residues 702–727 are disordered; the sequence is EFERETERDDVESKERDMAPGPKAQQ.

It belongs to the ABC transporter superfamily. ABCB family. Heavy Metal importer (TC 3.A.1.210) subfamily. Homodimer.

The protein resides in the mitochondrion inner membrane. In terms of biological role, performs an essential function in the generation of cytoplasmic iron-sulfur proteins by mediating the ATP-dependent export of Fe/S cluster precursors synthesized by nfs1 and other mitochondrial proteins. Hydrolyzes ATP. Binds glutathione and may function by transporting a glutathione-conjugated iron-sulfur compound. This Aspergillus fumigatus (strain ATCC MYA-4609 / CBS 101355 / FGSC A1100 / Af293) (Neosartorya fumigata) protein is Iron-sulfur clusters transporter atm1, mitochondrial.